Reading from the N-terminus, the 286-residue chain is 4-hydroxy-tetrahydrodipicolinate synthase (286 aa).

Residue Thr-42 participates in pyruvate binding. Tyr-129 functions as the Proton donor/acceptor in the catalytic mechanism. Lys-157 functions as the Schiff-base intermediate with substrate in the catalytic mechanism. Val-196 is a pyruvate binding site.

Belongs to the DapA family. As to quaternary structure, homotetramer; dimer of dimers.

It is found in the cytoplasm. It catalyses the reaction L-aspartate 4-semialdehyde + pyruvate = (2S,4S)-4-hydroxy-2,3,4,5-tetrahydrodipicolinate + H2O + H(+). The protein operates within amino-acid biosynthesis; L-lysine biosynthesis via DAP pathway; (S)-tetrahydrodipicolinate from L-aspartate: step 3/4. Catalyzes the condensation of (S)-aspartate-beta-semialdehyde [(S)-ASA] and pyruvate to 4-hydroxy-tetrahydrodipicolinate (HTPA). In Chlamydia muridarum (strain MoPn / Nigg), this protein is 4-hydroxy-tetrahydrodipicolinate synthase.